The chain runs to 159 residues: Ribosomal RNA large subunit methyltransferase H (159 aa).

S-adenosyl-L-methionine contacts are provided by residues Leu-76, Gly-108, and 127–132 (FSKMTF).

This sequence belongs to the RNA methyltransferase RlmH family. As to quaternary structure, homodimer.

It is found in the cytoplasm. It carries out the reaction pseudouridine(1915) in 23S rRNA + S-adenosyl-L-methionine = N(3)-methylpseudouridine(1915) in 23S rRNA + S-adenosyl-L-homocysteine + H(+). Its function is as follows. Specifically methylates the pseudouridine at position 1915 (m3Psi1915) in 23S rRNA. This is Ribosomal RNA large subunit methyltransferase H from Bacillus subtilis (strain 168).